Here is a 192-residue protein sequence, read N- to C-terminus: Thymidylate kinase (192 aa).

7-14 (GIDCVGKS) contributes to the ATP binding site.

Belongs to the thymidylate kinase family.

The catalysed reaction is dTMP + ATP = dTDP + ADP. Phosphorylation of dTMP to form dTDP in both de novo and salvage pathways of dTTP synthesis. The sequence is that of Thymidylate kinase from Campylobacter jejuni subsp. jejuni serotype O:23/36 (strain 81-176).